The sequence spans 213 residues: tRNA (guanine-N(7)-)-methyltransferase (213 aa).

4 residues coordinate S-adenosyl-L-methionine: E38, E63, D91, and D113. D113 is a catalytic residue. Substrate is bound by residues K117, D149, and 192–195; that span reads TEYE.

The protein belongs to the class I-like SAM-binding methyltransferase superfamily. TrmB family.

It catalyses the reaction guanosine(46) in tRNA + S-adenosyl-L-methionine = N(7)-methylguanosine(46) in tRNA + S-adenosyl-L-homocysteine. Its pathway is tRNA modification; N(7)-methylguanine-tRNA biosynthesis. Functionally, catalyzes the formation of N(7)-methylguanine at position 46 (m7G46) in tRNA. The sequence is that of tRNA (guanine-N(7)-)-methyltransferase from Mycoplasmoides gallisepticum (strain R(low / passage 15 / clone 2)) (Mycoplasma gallisepticum).